Reading from the N-terminus, the 65-residue chain is Kassorin-M (65 aa).

Residues 1–22 (MLTLKKSMLLLFFLGMVSFSLA) form the signal peptide. A propeptide spanning residues 23 to 51 (DDKREDEAEEGEDKRADEGEEKRAAEKKR) is cleaved from the precursor. Residues 24–45 (DKREDEAEEGEDKRADEGEEKR) are disordered. Leucine 64 bears the Leucine amide mark.

Belongs to the frog skin active peptide (FSAP) family. Brevinin subfamily. As to expression, expressed by the skin glands.

Its subcellular location is the secreted. Induces contraction of smooth muscle in isolated guinea pig urinary bladder (EC50=4.66 nM). Has no antimicrobial activity against the Gram-positive bacterium S.aureus, the Gram-negative bacterium E.coli and the yeast C.albicans. Elicits histamine release from rat peritoneal mast cells. The sequence is that of Kassorin-M from Phlyctimantis maculatus (Red-legged running frog).